The chain runs to 358 residues: DnaJ homolog subfamily B member 11 (358 aa).

An N-terminal signal peptide occupies residues 1–22 (MAPQNLSTFCLLLLYLIGAVIA). The region spanning 25–90 (DFYKILGVPR…EKRKQYDTYG (66 aa)) is the J domain. Residue Thr188 is modified to Phosphothreonine. The N-linked (GlcNAc...) asparagine glycan is linked to Asn261.

As to quaternary structure, part of a large chaperone multiprotein complex comprising DNAJB11, HSP90B1, HSPA5, HYOU, PDIA2, PDIA4, PDIA6, PPIB, SDF2L1, UGGT1 and very small amounts of ERP29, but not, or at very low levels, CALR nor CANX. Binds to denatured substrates in an ATP-independent manner. Interacts via the J domain with HSPA5 in an ATP-dependent manner. Contains high-mannose Endo H-sensitive carbohydrates. In terms of processing, cys-169, Cys-171, Cys-193 and Cys-196 form intramolecular disulfide bonds. The preferential partner for each Cys is not known. Post-translationally, thr-188 was reported to be phosphorylated upon DNA damage by ATM or ATR; however as this position has been shown to be in the ER lumen, the in vivo relevance is not proven. In terms of tissue distribution, widely expressed.

The protein localises to the endoplasmic reticulum lumen. Functionally, as a co-chaperone for HSPA5 it is required for proper folding, trafficking or degradation of proteins. Binds directly to both unfolded proteins that are substrates for ERAD and nascent unfolded peptide chains, but dissociates from the HSPA5-unfolded protein complex before folding is completed. May help recruiting HSPA5 and other chaperones to the substrate. Stimulates HSPA5 ATPase activity. It is necessary for maturation and correct trafficking of PKD1. The polypeptide is DnaJ homolog subfamily B member 11 (DNAJB11) (Homo sapiens (Human)).